The chain runs to 278 residues: uncharacterized protein (278 aa).

A signal peptide spans 1–32 (MSSASFTTKALSVLAALTAASAPLVAASPAHA). One can recognise a Peptidase S1 domain in the interval 33 to 236 (LANARNVTGS…HAEWIAYYTG (204 aa)). Cys-59 and Cys-75 are joined by a disulfide. Catalysis depends on charge relay system residues His-74, Asp-123, and Ser-189.

It belongs to the peptidase S1 family.

The protein resides in the secreted. This is an uncharacterized protein from Corynebacterium glutamicum (strain R).